Consider the following 714-residue polypeptide: Fatty acid oxidation complex subunit alpha (714 aa).

Residues 1-190 (MEMASAFTLN…KLGLVDDVVP (190 aa)) form an enoyl-CoA hydratase region. Residues 306 to 714 (APLNSVGILG…FWKTTATDLQ (409 aa)) form a 3-hydroxyacyl-CoA dehydrogenase region.

This sequence in the N-terminal section; belongs to the enoyl-CoA hydratase/isomerase family. It in the central section; belongs to the 3-hydroxyacyl-CoA dehydrogenase family. In terms of assembly, heterotetramer of two alpha chains (FadJ) and two beta chains (FadI).

The protein resides in the cytoplasm. It catalyses the reaction a (3S)-3-hydroxyacyl-CoA = a (2E)-enoyl-CoA + H2O. The enzyme catalyses a 4-saturated-(3S)-3-hydroxyacyl-CoA = a (3E)-enoyl-CoA + H2O. The catalysed reaction is a (3S)-3-hydroxyacyl-CoA + NAD(+) = a 3-oxoacyl-CoA + NADH + H(+). It carries out the reaction (3S)-3-hydroxybutanoyl-CoA = (3R)-3-hydroxybutanoyl-CoA. It functions in the pathway lipid metabolism; fatty acid beta-oxidation. Functionally, catalyzes the formation of a hydroxyacyl-CoA by addition of water on enoyl-CoA. Also exhibits 3-hydroxyacyl-CoA epimerase and 3-hydroxyacyl-CoA dehydrogenase activities. The sequence is that of Fatty acid oxidation complex subunit alpha from Escherichia coli (strain SMS-3-5 / SECEC).